A 748-amino-acid polypeptide reads, in one-letter code: Histone-lysine N-methyltransferase EZH2 (748 aa).

Acidic residues predominate over residues 184–199 (YEDDEDGDDNQDDEQD). Disordered stretches follow at residues 184 to 220 (YEDDEDGDDNQDDEQDDTAKDQDDNMEDKETQPLRKF) and 342 to 428 (AERI…NIEP). Positions 200–220 (DTAKDQDDNMEDKETQPLRKF) are enriched in basic and acidic residues. Positions 347–359 (TPPKRPSGRRRGR) are enriched in basic residues. Residues 362–374 (NNTSRPSTPTVNV) are compositionally biased toward polar residues. Basic and acidic residues predominate over residues 376 to 387 (EAKDTDSDREAG). The CXC domain occupies 505–607 (CRKIQLKKDG…SKNVSCKNCS (103 aa)). Residues 614–729 (KHLLLAPSDV…TGEELFFDYR (116 aa)) form the SET domain.

Belongs to the class V-like SAM-binding methyltransferase superfamily. Histone-lysine methyltransferase family. EZ subfamily. Component of the prc2/eed-ezh2 complex.

The protein localises to the nucleus. The catalysed reaction is L-lysyl(27)-[histone H3] + 3 S-adenosyl-L-methionine = N(6),N(6),N(6)-trimethyl-L-lysyl(27)-[histone H3] + 3 S-adenosyl-L-homocysteine + 3 H(+). Its function is as follows. Polycomb group (PcG) protein. Catalytic subunit of the prc2/eed-ezh2 complex, which methylates 'Lys-9' and 'Lys-27' of histone H3, leading to transcriptional repression of the affected target gene. May repress transcription of the egr2 and en2 genes. May regulate the circadian clock via histone methylation at the promoter of the circadian genes. The polypeptide is Histone-lysine N-methyltransferase EZH2 (ezh2-a) (Xenopus laevis (African clawed frog)).